The following is a 124-amino-acid chain: uncharacterized protein (124 aa).

The segment at 44–92 (DRVENSGNGTGSISAPLTDLGPSIGDSHENKGADIPIHPPLDTQSHAKD) is disordered. Positions 48-58 (NSGNGTGSISA) are enriched in polar residues.

This is an uncharacterized protein from Caenorhabditis elegans.